Consider the following 94-residue polypeptide: Ribonuclease P protein component 1 (94 aa).

This sequence belongs to the eukaryotic/archaeal RNase P protein component 1 family. Consists of a catalytic RNA component and at least 4-5 protein subunits.

It localises to the cytoplasm. It carries out the reaction Endonucleolytic cleavage of RNA, removing 5'-extranucleotides from tRNA precursor.. In terms of biological role, part of ribonuclease P, a protein complex that generates mature tRNA molecules by cleaving their 5'-ends. In Thermofilum pendens (strain DSM 2475 / Hrk 5), this protein is Ribonuclease P protein component 1.